Here is a 466-residue protein sequence, read N- to C-terminus: Cysteine--tRNA ligase 1 (466 aa).

C27 contacts Zn(2+). The 'HIGH' region signature appears at P29–H39. Zn(2+)-binding residues include C211, H236, and E240. A 'KMSKS' region motif is present at residues K267 to S271. K270 provides a ligand contact to ATP.

This sequence belongs to the class-I aminoacyl-tRNA synthetase family. Monomer. Zn(2+) serves as cofactor.

The protein resides in the cytoplasm. It catalyses the reaction tRNA(Cys) + L-cysteine + ATP = L-cysteinyl-tRNA(Cys) + AMP + diphosphate. The sequence is that of Cysteine--tRNA ligase 1 from Tropheryma whipplei (strain TW08/27) (Whipple's bacillus).